The chain runs to 181 residues: tRNA-splicing endonuclease (181 aa).

Active-site residues include Tyr-118, His-126, and Lys-157.

It belongs to the tRNA-intron endonuclease family. Archaeal short subfamily. As to quaternary structure, homotetramer; although the tetramer contains four active sites, only two participate in the cleavage. Therefore, it should be considered as a dimer of dimers.

The catalysed reaction is pretRNA = a 3'-half-tRNA molecule with a 5'-OH end + a 5'-half-tRNA molecule with a 2',3'-cyclic phosphate end + an intron with a 2',3'-cyclic phosphate and a 5'-hydroxyl terminus.. Endonuclease that removes tRNA introns. Cleaves pre-tRNA at the 5'- and 3'-splice sites to release the intron. The products are an intron and two tRNA half-molecules bearing 2',3' cyclic phosphate and 5'-OH termini. Recognizes a pseudosymmetric substrate in which 2 bulged loops of 3 bases are separated by a stem of 4 bp. The polypeptide is tRNA-splicing endonuclease (Hyperthermus butylicus (strain DSM 5456 / JCM 9403 / PLM1-5)).